Reading from the N-terminus, the 166-residue chain is Ribosome maturation factor RimP (166 aa).

This sequence belongs to the RimP family.

It is found in the cytoplasm. Required for maturation of 30S ribosomal subunits. The chain is Ribosome maturation factor RimP from Psychrobacter arcticus (strain DSM 17307 / VKM B-2377 / 273-4).